The chain runs to 193 residues: Inner membrane-spanning protein YciB (193 aa).

6 consecutive transmembrane segments (helical) span residues 5 to 25 (TLDA…FYIY), 36 to 56 (IIAA…LMFV), 67 to 87 (WLVV…QDDF), 93 to 113 (APII…FLGG), 138 to 158 (VWVG…FVWV), and 164 to 184 (FTAF…FWFL).

Belongs to the YciB family.

It is found in the cell inner membrane. Plays a role in cell envelope biogenesis, maintenance of cell envelope integrity and membrane homeostasis. The chain is Inner membrane-spanning protein YciB from Vitreoscilla sp. (strain C1).